A 406-amino-acid polypeptide reads, in one-letter code: MTKVLVMFMDFLFENSWKAVCPYNPKLDLKDIYIYDTTLRDGEQTPGVCFTKEQKLEIARKLDELGLKQIEAGFPIVSEREADIVKTIANEGLNADILALCRALKKDIDKAIECDVDGIITFIATSPLHLKYKFNNKSLDEILEMGVEAVEYAKEHGLFVAFSAEDATRTPIEDLIKVHKAAEEAGADRVHIADTTGCATPQSMEFICKTLKENLKKAHIGVHCHNDFGFAVINSIYGLIGGAKAVSTTVNGIGERAGNAALEELIMALTVLYDVDLGLNLEVLPELCRMVEEYSGIKMPKNKPIVGELVFAHESGIHVDAVIENPLTYEPFLPEKIGLKRNILLGKHSGCRAVAYKLKLMGIDYDREMLCEIVKKVKEIREEGKFITDEVFKEIVEEVLRKRNKN.

In terms of domain architecture, Pyruvate carboxyltransferase spans 32 to 285 (IYIYDTTLRD…DLGLNLEVLP (254 aa)).

It belongs to the alpha-IPM synthase/homocitrate synthase family.

It catalyses the reaction acetyl-CoA + 2-oxoglutarate + H2O = (2R)-homocitrate + CoA + H(+). The enzyme catalyses 2-oxoadipate + acetyl-CoA + H2O = (R)-dihomocitrate + CoA + H(+). It carries out the reaction 2-oxoheptanedioate + acetyl-CoA + H2O = (R)-trihomocitrate + CoA + H(+). Its pathway is organic acid metabolism; 2-oxosuberate biosynthesis. In terms of biological role, catalyzes the condensation of alpha-ketoglutarate and acetyl-CoA to form (R)-homocitrate. Can also catalyze the condensation of alpha-ketoadipate with acetyl-CoA to form (R)-homo(2)citrate, and the condensation of alpha-ketopimelate with acetyl-CoA to form (R)-homo(3)citrate. These reactions are part of the biosynthesis pathway of coenzyme B and biotin. The sequence is that of Homocitrate synthase AksA (aksA) from Methanocaldococcus jannaschii (strain ATCC 43067 / DSM 2661 / JAL-1 / JCM 10045 / NBRC 100440) (Methanococcus jannaschii).